We begin with the raw amino-acid sequence, 466 residues long: Glutamate--tRNA ligase (466 aa).

A 'HIGH' region motif is present at residues 10–20; sequence PSPTGFLHIGG. Positions 252–256 match the 'KMSKS' region motif; sequence KLSKR. Lys-255 is a binding site for ATP.

Belongs to the class-I aminoacyl-tRNA synthetase family. Glutamate--tRNA ligase type 1 subfamily. As to quaternary structure, monomer.

It is found in the cytoplasm. It catalyses the reaction tRNA(Glu) + L-glutamate + ATP = L-glutamyl-tRNA(Glu) + AMP + diphosphate. Its function is as follows. Catalyzes the attachment of glutamate to tRNA(Glu) in a two-step reaction: glutamate is first activated by ATP to form Glu-AMP and then transferred to the acceptor end of tRNA(Glu). The polypeptide is Glutamate--tRNA ligase (Mycoplasmopsis synoviae (strain 53) (Mycoplasma synoviae)).